The following is a 283-amino-acid chain: Pantothenate synthetase (283 aa).

31–38 (MGALHEGH) is an ATP binding site. The active-site Proton donor is histidine 38. Glutamine 62 contributes to the (R)-pantoate binding site. Residue glutamine 62 participates in beta-alanine binding. 148 to 151 (GKKD) is an ATP binding site. Position 154 (glutamine 154) interacts with (R)-pantoate. ATP contacts are provided by residues valine 177 and 185–188 (RSSR).

Belongs to the pantothenate synthetase family. Homodimer.

Its subcellular location is the cytoplasm. The catalysed reaction is (R)-pantoate + beta-alanine + ATP = (R)-pantothenate + AMP + diphosphate + H(+). The protein operates within cofactor biosynthesis; (R)-pantothenate biosynthesis; (R)-pantothenate from (R)-pantoate and beta-alanine: step 1/1. Catalyzes the condensation of pantoate with beta-alanine in an ATP-dependent reaction via a pantoyl-adenylate intermediate. The protein is Pantothenate synthetase of Staphylococcus haemolyticus (strain JCSC1435).